A 183-amino-acid polypeptide reads, in one-letter code: Large ribosomal subunit protein uL6 (183 aa).

This sequence belongs to the universal ribosomal protein uL6 family. As to quaternary structure, part of the 50S ribosomal subunit.

This protein binds to the 23S rRNA, and is important in its secondary structure. It is located near the subunit interface in the base of the L7/L12 stalk, and near the tRNA binding site of the peptidyltransferase center. This is Large ribosomal subunit protein uL6 from Porphyromonas gingivalis (strain ATCC 33277 / DSM 20709 / CIP 103683 / JCM 12257 / NCTC 11834 / 2561).